The chain runs to 116 residues: Ferredoxin (116 aa).

4Fe-4S ferredoxin-type domains lie at 2-31 (TYVV…EGER) and 35-64 (FMLV…PESP). [3Fe-4S] cluster-binding residues include C9 and C17. [4Fe-4S] cluster-binding residues include C21, C44, C47, and C50. C54 is a [3Fe-4S] cluster binding site.

Requires [4Fe-4S] cluster as cofactor. The cofactor is [3Fe-4S] cluster.

Its function is as follows. Ferredoxins are iron-sulfur proteins that transfer electrons in a wide variety of metabolic reactions. The protein is Ferredoxin (fdxA) of Rickettsia conorii (strain ATCC VR-613 / Malish 7).